The chain runs to 320 residues: MQTRNTFSWIREEITRSISVSLMIYIITWASISGAYPIFAQQNYENPREATGRIVCANCHLANKPVDIEVPQTVLPDTVFEAVVKIPYDMQLKQVLANGKKGALNVGAVLILPEGFELAPPDRISPEMKEKIGNLSFQNYRPNKKNILVIGPVPGQKYSEITFPILAPDPATNKDVHFLKYPIYVGGNRGRGQIYPDGSKSNNTVYNATAGGIISKILRKEKGGYEITIVDASNGREVIDIIPRGLELLVSEGESIKLDQPLTSNPNVGGFGQGDAEIVLQDPLRVQGLLFFLGSVVLAQIFLVLKKKQFEKVQLSEMNF.

The N-terminal stretch at 1-35 is a signal peptide; that stretch reads MQTRNTFSWIREEITRSISVSLMIYIITWASISGA. Heme contacts are provided by Tyr-36, Cys-56, Cys-59, and His-60. The helical transmembrane segment at 286-306 threads the bilayer; it reads VQGLLFFLGSVVLAQIFLVLK.

Belongs to the cytochrome f family. In terms of assembly, the 4 large subunits of the cytochrome b6-f complex are cytochrome b6, subunit IV (17 kDa polypeptide, petD), cytochrome f and the Rieske protein, while the 4 small subunits are PetG, PetL, PetM and PetN. The complex functions as a dimer. The cofactor is heme.

It is found in the plastid. The protein localises to the chloroplast thylakoid membrane. In terms of biological role, component of the cytochrome b6-f complex, which mediates electron transfer between photosystem II (PSII) and photosystem I (PSI), cyclic electron flow around PSI, and state transitions. The polypeptide is Cytochrome f (Capsella bursa-pastoris (Shepherd's purse)).